The chain runs to 532 residues: UDP-glucuronosyltransferase 1A4 (532 aa).

Positions 1–27 are cleaved as a signal peptide; that stretch reads MVLGVWITLWRLVRLLLLLCVLPWAEG. 2 N-linked (GlcNAc...) asparagine glycosylation sites follow: asparagine 141 and asparagine 295. The chain crosses the membrane as a helical span at residues 490-506; that stretch reads VIGFLLAIVLTVAFVTF.

The protein belongs to the UDP-glycosyltransferase family. In terms of assembly, homodimers. Homooligomer. Interacts with UGT1A1, UGT1A3, UGT1A6, UGT1A7, UGT1A8, UGT1A9 and UGT1A10 to form heterodimers.

It localises to the endoplasmic reticulum membrane. The catalysed reaction is glucuronate acceptor + UDP-alpha-D-glucuronate = acceptor beta-D-glucuronoside + UDP + H(+). The enzyme catalyses calcidiol + UDP-alpha-D-glucuronate = calcidiol 25-O-(beta-D-glucuronide) + UDP + H(+). It catalyses the reaction calcidiol + UDP-alpha-D-glucuronate = calcidiol 3-O-(beta-D-glucuronide) + UDP + H(+). It carries out the reaction calcitriol + UDP-alpha-D-glucuronate = calcitriol 25-O-(beta-D-glucuronide) + UDP + H(+). The catalysed reaction is (5Z,8Z,11Z,14Z)-eicosatetraenoate + UDP-alpha-D-glucuronate = O-[(5Z),(8Z),(11Z),(14Z)-eicosatetraenoyl]-beta-D-glucuronate + UDP. The enzyme catalyses 15-hydroxy-(5Z,8Z,11Z,13E)-eicosatetraenoate + UDP-alpha-D-glucuronate = 15-O-(beta-D-glucuronosyl)-(5Z,8Z,11Z,14Z)-eicosatetraenoate + UDP + H(+). It catalyses the reaction 20-hydroxy-(5Z,8Z,11Z,14Z)-eicosatetraenoate + UDP-alpha-D-glucuronate = 20-O-(beta-D-glucuronosyl)-(5Z,8Z,11Z,14Z)-eicosatetraenoate + UDP + H(+). In terms of biological role, UDP-glucuronosyltransferase (UGT) that catalyzes phase II biotransformation reactions in which lipophilic substrates are conjugated with glucuronic acid to increase the metabolite's water solubility, thereby facilitating excretion into either the urine or bile. Essential for the elimination and detoxification of drugs, xenobiotics and endogenous compounds. Involved in the glucuronidation of calcidiol, which is the major circulating form of vitamin D3 essential for the regulation of calcium and phosphate homeostasis. Also glucuronidates the biologically active form of vitamin D3, calcitriol, probably leading to its biliary transport and intestinal reabsorption. Involved in the glucuronidation of arachidonic acid (AA) and AA-derived eicosanoids including 15-HETE, 20-HETE and PGB1. The sequence is that of UDP-glucuronosyltransferase 1A4 (Ugt1a4) from Oryctolagus cuniculus (Rabbit).